Consider the following 438-residue polypeptide: Phosphoribosylamine--glycine ligase (438 aa).

One can recognise an ATP-grasp domain in the interval 108–316 (RTFMERNEIP…LLEVAEGIVD (209 aa)). 135 to 194 (VDDFGRPVVVKPIGLTGGKGVKVVGYQLRDNEEAKSYAEELIRRDGRVLIEERTNGVEFT) lines the ATP pocket. Q274, E286, and N288 together coordinate Mg(2+). Mn(2+)-binding residues include Q274, E286, and N288.

This sequence belongs to the GARS family. Mg(2+) serves as cofactor. Mn(2+) is required as a cofactor.

The catalysed reaction is 5-phospho-beta-D-ribosylamine + glycine + ATP = N(1)-(5-phospho-beta-D-ribosyl)glycinamide + ADP + phosphate + H(+). It functions in the pathway purine metabolism; IMP biosynthesis via de novo pathway; N(1)-(5-phospho-D-ribosyl)glycinamide from 5-phospho-alpha-D-ribose 1-diphosphate: step 2/2. The sequence is that of Phosphoribosylamine--glycine ligase from Thermococcus gammatolerans (strain DSM 15229 / JCM 11827 / EJ3).